A 400-amino-acid chain; its full sequence is NADH-ubiquinone oxidoreductase 49 kDa subunit (400 aa).

Belongs to the complex I 49 kDa subunit family.

It is found in the mitochondrion. The catalysed reaction is a ubiquinone + NADH + 5 H(+)(in) = a ubiquinol + NAD(+) + 4 H(+)(out). Its function is as follows. Core subunit of the mitochondrial membrane respiratory chain NADH dehydrogenase (Complex I) that is believed to belong to the minimal assembly required for catalysis. Complex I functions in the transfer of electrons from NADH to the respiratory chain. The immediate electron acceptor for the enzyme is believed to be ubiquinone. Component of the iron-sulfur (IP) fragment of the enzyme. Component of the iron-sulfur (IP) fragment of the enzyme. This is NADH-ubiquinone oxidoreductase 49 kDa subunit (NAD7) from Paramecium tetraurelia.